The primary structure comprises 387 residues: Exodeoxyribonuclease 7 large subunit (387 aa).

The protein belongs to the XseA family. As to quaternary structure, heterooligomer composed of large and small subunits.

Its subcellular location is the cytoplasm. It catalyses the reaction Exonucleolytic cleavage in either 5'- to 3'- or 3'- to 5'-direction to yield nucleoside 5'-phosphates.. Its function is as follows. Bidirectionally degrades single-stranded DNA into large acid-insoluble oligonucleotides, which are then degraded further into small acid-soluble oligonucleotides. This is Exodeoxyribonuclease 7 large subunit from Synechococcus sp. (strain CC9902).